The primary structure comprises 244 residues: Phosphoadenosine 5'-phosphosulfate reductase (244 aa).

Cys-239 (nucleophile; cysteine thiosulfonate intermediate) is an active-site residue.

It belongs to the PAPS reductase family. CysH subfamily.

The protein localises to the cytoplasm. It catalyses the reaction [thioredoxin]-disulfide + sulfite + adenosine 3',5'-bisphosphate + 2 H(+) = [thioredoxin]-dithiol + 3'-phosphoadenylyl sulfate. The protein operates within sulfur metabolism; hydrogen sulfide biosynthesis; sulfite from sulfate: step 3/3. In terms of biological role, catalyzes the formation of sulfite from phosphoadenosine 5'-phosphosulfate (PAPS) using thioredoxin as an electron donor. This is Phosphoadenosine 5'-phosphosulfate reductase from Buchnera aphidicola subsp. Acyrthosiphon pisum (strain 5A).